The following is a 397-amino-acid chain: Phosphoglycerate kinase (397 aa).

Residues 26–28 (DLN), arginine 42, 65–68 (HLGR), arginine 119, and arginine 152 contribute to the substrate site. ATP is bound by residues lysine 203, glutamate 325, and 351–354 (GGDT).

Belongs to the phosphoglycerate kinase family. In terms of assembly, monomer.

The protein localises to the cytoplasm. The enzyme catalyses (2R)-3-phosphoglycerate + ATP = (2R)-3-phospho-glyceroyl phosphate + ADP. The protein operates within carbohydrate degradation; glycolysis; pyruvate from D-glyceraldehyde 3-phosphate: step 2/5. The protein is Phosphoglycerate kinase of Bordetella bronchiseptica (strain ATCC BAA-588 / NCTC 13252 / RB50) (Alcaligenes bronchisepticus).